The sequence spans 496 residues: Squalene epoxidase ERG1 (496 aa).

Residues 4 to 24 (VKYDAIIIGAGVIGPTIATAF) form a helical membrane-spanning segment. FAD contacts are provided by residues 15 to 16 (VI), 35 to 36 (ER), Arg-43, Arg-148, Val-164, Asp-332, and Met-345. The next 2 membrane-spanning stretches (helical) occupy residues 431 to 451 (IGLLSGMLPFPMLLFNHFFSV) and 466 to 486 (LGFPLALFEAFEVLFTAIVIF).

It belongs to the squalene monooxygenase family. FAD serves as cofactor.

The protein localises to the microsome membrane. It is found in the endoplasmic reticulum membrane. It carries out the reaction squalene + reduced [NADPH--hemoprotein reductase] + O2 = (S)-2,3-epoxysqualene + oxidized [NADPH--hemoprotein reductase] + H2O + H(+). Its pathway is terpene metabolism; lanosterol biosynthesis; lanosterol from farnesyl diphosphate: step 2/3. Activity is completely abolished by Triton X-100, deoxycholate or Cu(2+), and partially inhibited by thiol reagents, rotenone and antimycin A. The allylamine antimycotic agents naftifine and SF 86-327are potent inhibitors and show apparently non-competitive kinetics with respect to the substrate squalene. In terms of biological role, squalene epoxidase; part of the third module of ergosterol biosynthesis pathway that includes the late steps of the pathway. Erg1 catalyzes the epoxidation of squalene into 2,3-epoxysqualene. The third module or late pathway involves the ergosterol synthesis itself through consecutive reactions that mainly occur in the endoplasmic reticulum (ER) membrane. Firstly, the squalene synthase ERG9 catalyzes the condensation of 2 farnesyl pyrophosphate moieties to form squalene, which is the precursor of all steroids. Squalene synthase is crucial for balancing the incorporation of farnesyl diphosphate (FPP) into sterol and nonsterol isoprene synthesis. Secondly, the squalene epoxidase ERG1 catalyzes the stereospecific oxidation of squalene to (S)-2,3-epoxysqualene, which is considered to be a rate-limiting enzyme in steroid biosynthesis. Then, the lanosterol synthase ERG7 catalyzes the cyclization of (S)-2,3 oxidosqualene to lanosterol, a reaction that forms the sterol core. In the next steps, lanosterol is transformed to zymosterol through a complex process involving various demethylation, reduction and desaturation reactions. The lanosterol 14-alpha-demethylase ERG11 (also known as CYP51) catalyzes C14-demethylation of lanosterol to produce 4,4'-dimethyl cholesta-8,14,24-triene-3-beta-ol, which is critical for ergosterol biosynthesis. The C-14 reductase ERG24 reduces the C14=C15 double bond of 4,4-dimethyl-cholesta-8,14,24-trienol to produce 4,4-dimethyl-cholesta-8,24-dienol. 4,4-dimethyl-cholesta-8,24-dienol is substrate of the C-4 demethylation complex ERG25-ERG26-ERG27 in which ERG25 catalyzes the three-step monooxygenation required for the demethylation of 4,4-dimethyl and 4alpha-methylsterols, ERG26 catalyzes the oxidative decarboxylation that results in a reduction of the 3-beta-hydroxy group at the C-3 carbon to an oxo group, and ERG27 is responsible for the reduction of the keto group on the C-3. ERG28 has a role as a scaffold to help anchor ERG25, ERG26 and ERG27 to the endoplasmic reticulum and ERG29 regulates the activity of the iron-containing C4-methylsterol oxidase ERG25. Then, the sterol 24-C-methyltransferase ERG6 catalyzes the methyl transfer from S-adenosyl-methionine to the C-24 of zymosterol to form fecosterol. The C-8 sterol isomerase ERG2 catalyzes the reaction which results in unsaturation at C-7 in the B ring of sterols and thus converts fecosterol to episterol. The sterol-C5-desaturase ERG3 then catalyzes the introduction of a C-5 double bond in the B ring to produce 5-dehydroepisterol. The C-22 sterol desaturase ERG5 further converts 5-dehydroepisterol into ergosta-5,7,22,24(28)-tetraen-3beta-ol by forming the C-22(23) double bond in the sterol side chain. Finally, ergosta-5,7,22,24(28)-tetraen-3beta-ol is substrate of the C-24(28) sterol reductase ERG4 to produce ergosterol. The sequence is that of Squalene epoxidase ERG1 from Candida albicans (strain SC5314 / ATCC MYA-2876) (Yeast).